We begin with the raw amino-acid sequence, 92 residues long: Putative lambdoid prophage defective integrase (92 aa).

Belongs to the 'phage' integrase family.

This is Putative lambdoid prophage defective integrase (intG) from Escherichia coli O157:H7.